The chain runs to 573 residues: DNA ligase (573 aa).

Residue glutamate 250 coordinates ATP. Lysine 252 functions as the N6-AMP-lysine intermediate in the catalytic mechanism. Residues arginine 257, arginine 272, glutamate 301, phenylalanine 342, arginine 432, and lysine 438 each coordinate ATP.

Belongs to the ATP-dependent DNA ligase family. The cofactor is Mg(2+).

The enzyme catalyses ATP + (deoxyribonucleotide)n-3'-hydroxyl + 5'-phospho-(deoxyribonucleotide)m = (deoxyribonucleotide)n+m + AMP + diphosphate.. Functionally, DNA ligase that seals nicks in double-stranded DNA during DNA replication, DNA recombination and DNA repair. The sequence is that of DNA ligase from Methanococcus maripaludis (strain C7 / ATCC BAA-1331).